Consider the following 435-residue polypeptide: MEVKAKLLNTANAAAQTEVKASELNAKVENLAKKAAKNIKIDGFRKGKVPVAQVLKRYGKDLENDAKSEIFRDIVNESLKLIAKKSSDIIGEPMILKFDEKDGNIDIELEISFKPEVKVDGYEEIIPEYTTPKVTKKEIEEKINEFLKMIAPLEKVEKESLEKGDFAKFDFEGFVDGEAFEGGKAEGYLLEIGSGQFIPGFEDGMLGLKVGEQKDVNVTFPAEYGAAHLAGKSAVFKVKLHEIQGKKAGKLDEETLKKLMPNEENPTAEQLEDRIKEQIRADKFQKLLNEDLKPKFADKAVEKFKFDLPNNIVEQEIDMQFRSAWGNFSEDEMKKFREDKEALKKQRETYKNEAIKSVQLTFIIDELAKQKGITVSDNELLQAVYFEAYRYGIDPKEHLESYKKQGMLPAVKMAMIEEKLFNNLFKSGNREDKGE.

Positions 164 to 249 (GDFAKFDFEG…LHEIQGKKAG (86 aa)) constitute a PPIase FKBP-type domain.

Belongs to the FKBP-type PPIase family. Tig subfamily.

The protein resides in the cytoplasm. It carries out the reaction [protein]-peptidylproline (omega=180) = [protein]-peptidylproline (omega=0). Involved in protein export. Acts as a chaperone by maintaining the newly synthesized protein in an open conformation. Functions as a peptidyl-prolyl cis-trans isomerase. This is Trigger factor from Campylobacter fetus subsp. fetus (strain 82-40).